The primary structure comprises 799 residues: DISARM protein DrmE (799 aa).

The protein localises to the cytoplasm. In terms of biological role, component of antiviral defense system DISARM (defense island system associated with restriction-modification), composed of DrmE, DrmA, DrmB, DrmC and DrmMII. DISARM is probably a multi-gene restriction module, this subunit has an unknown function. Expression of DISARM in B.subtilis (strain BEST7003) confers resistance to phages Nf, phi29, phi105, phi3T, SPO1, SPR and SPP1. Protection is over 10(7)-fold against phi3T, 10(4)-10(5)-fold against Nf, phi29, phi105 and SPR, 100-fold against SPO1 and 10-fold against SPP1. DISARM does not interfere with phage adsorption, but instead interferes with (phi3T) DNA replication early in its cycle, preventing replication, circularization and lysogeny and probably causes phage DNA degradation (DNA is degraded in SPP1-infected cells). In Bacillus paralicheniformis (strain ATCC 9945a / NCIMB 11709 / CD-2), this protein is DISARM protein DrmE.